Here is a 496-residue protein sequence, read N- to C-terminus: Aminoacetaldehyde dehydrogenase (496 aa).

NADH is bound by residues Leu-166, Trp-168, Lys-192, Ser-246, Thr-249, and Tyr-256. The active-site Proton acceptor is Glu-268. Cys-269 serves as a coordination point for NADH. Catalysis depends on Cys-303, which acts as the Nucleophile. NADH is bound by residues Lys-353 and Glu-398.

The protein belongs to the aldehyde dehydrogenase family. In terms of assembly, homotetramer, formed by two symmetrical dimers.

The catalysed reaction is aminoacetaldehyde + NAD(+) + H2O = glycine + NADH + 2 H(+). It catalyses the reaction 3-aminopropanal + NAD(+) + H2O = beta-alanine + NADH + 2 H(+). In terms of biological role, NAD(+)-dependent aminoaldehyde dehydrogenase highly efficient with protonated aminoacetaldehyde (ACTAL) and 3-aminopropanaldehyde (APAL). Likely participates in a still uncharacterized metabolic pathway present in proteobacteria species, in which ACTAL might be an intermediate, yielding glycine. Highly prefers NAD(+) over NADP(+). Shows very poor activity with acetaldehyde, propanaldehyde, butanaldehyde, pentanaldehyde, dimethylaminoacetaldehyde, trimethylaminoacetaldehyde (betaine aldehyde), trimethylaminobutanaldehyde, short aliphatic hydroxyaldehydes such as 3-hydroxypropanaldehyde and 2-hydroxypropanaldehyde (lactaldehyde), and aromatic aldehydes. This is Aminoacetaldehyde dehydrogenase from Pseudomonas aeruginosa (strain ATCC 15692 / DSM 22644 / CIP 104116 / JCM 14847 / LMG 12228 / 1C / PRS 101 / PAO1).